The following is a 629-amino-acid chain: FAST kinase domain-containing protein 4 (629 aa).

The 59-residue stretch at Ile559–Asp617 folds into the RAP domain.

It belongs to the FAST kinase family.

It is found in the mitochondrion matrix. Functionally, plays a role in processing of mitochondrial RNA precursors and in stabilization of a subset of mature mitochondrial RNA species, such as MT-CO1, MT-CO2, MT-CYB, MT-CO3, MT-ND3, MT-ND5 and MT-ATP8/6. May play a role in cell cycle progression. This is FAST kinase domain-containing protein 4 (Tbrg4) from Rattus norvegicus (Rat).